The primary structure comprises 279 residues: 2-dehydro-3-deoxyphosphooctonate aldolase (279 aa).

It belongs to the KdsA family.

Its subcellular location is the cytoplasm. The catalysed reaction is D-arabinose 5-phosphate + phosphoenolpyruvate + H2O = 3-deoxy-alpha-D-manno-2-octulosonate-8-phosphate + phosphate. It functions in the pathway carbohydrate biosynthesis; 3-deoxy-D-manno-octulosonate biosynthesis; 3-deoxy-D-manno-octulosonate from D-ribulose 5-phosphate: step 2/3. It participates in bacterial outer membrane biogenesis; lipopolysaccharide biosynthesis. The sequence is that of 2-dehydro-3-deoxyphosphooctonate aldolase from Azoarcus sp. (strain BH72).